The sequence spans 88 residues: MKYFVVALALAVALVCIAESTAYDVNEELENELDDLSDAAWLAKAAEDLQALDDFEESEESRSMWSGMWRRKLKKLRNALKKKLKGEK.

Positions 1–22 (MKYFVVALALAVALVCIAESTA) are cleaved as a signal peptide. Residues 23–62 (YDVNEELENELDDLSDAAWLAKAAEDLQALDDFEESEESR) constitute a propeptide that is removed on maturation. Positions 59–62 (EESR) match the Processing quadruplet motif motif.

Post-translationally, cleavage of the propeptide depends on the processing quadruplet motif (XXXR, with at least one of X being E). As to expression, expressed by the venom gland.

It is found in the secreted. In terms of biological role, has antimicrobial activity against Gram-positive bacteria (A.globiformis VKM Ac-1112 (MIC=0.5 uM), and B.subtilis VKM B-501 (MIC=1.0 uM)), Gram-negative bacteria (E.coli DH5-alpha (MIC=1.0 uM), E.coli MH1 (MIC=0.7 uM), and P.aeruginosa PAO1 (MIC=4.1 uM)), and yeasts (P.pastoris GS115 (MIC=17 uM), and S.cerevisiae Y190 (MIC&gt;33 uM)). Has a moderate hemolytic activity against rabbit erythrocytes. Causes paralysis, but is not lethal when injected into insect (M.domestica) larvae. In Lachesana tarabaevi (Spider), this protein is M-zodatoxin-Lt1a.